A 185-amino-acid polypeptide reads, in one-letter code: Elongation factor P (185 aa).

The protein belongs to the elongation factor P family.

The protein resides in the cytoplasm. It participates in protein biosynthesis; polypeptide chain elongation. Involved in peptide bond synthesis. Stimulates efficient translation and peptide-bond synthesis on native or reconstituted 70S ribosomes in vitro. Probably functions indirectly by altering the affinity of the ribosome for aminoacyl-tRNA, thus increasing their reactivity as acceptors for peptidyl transferase. The chain is Elongation factor P from Streptococcus pyogenes serotype M5 (strain Manfredo).